A 1060-amino-acid polypeptide reads, in one-letter code: DNA topoisomerase 1 (1060 aa).

The region spanning 1 to 141 is the Toprim domain; that stretch reads MILVIAEKPN…KRMKFSALTK (141 aa). Mg(2+) is bound by residues glutamate 7 and aspartate 107. In terms of domain architecture, Topo IA-type catalytic spans 156–947; it reads NFGMANAGIA…EAKIRLTKIL (792 aa). Residues 196–201 form an interaction with DNA region; sequence STGRVQ. Positions 482–591 constitute a DOD-type homing endonuclease domain; that stretch reads LIGYLAGKGG…IKVYLQLLGI (110 aa). Catalysis depends on tyrosine 690, which acts as the O-(5'-phospho-DNA)-tyrosine intermediate. The C4-type 1 zinc finger occupies 978-1006; the sequence is CPKCGGDLIVKYNEKTGKRFVGCSNWPKC. A C4-type 2; atypical zinc finger spans residues 1025-1050; that stretch reads CCNGAPVVIIREKDGREWEICLDMNC.

The protein belongs to the type IA topoisomerase family. In terms of assembly, monomer. Mg(2+) serves as cofactor. This protein undergoes a protein self splicing that involves a post-translational excision of the intervening region (intein) followed by peptide ligation.

The catalysed reaction is ATP-independent breakage of single-stranded DNA, followed by passage and rejoining.. Its function is as follows. Releases the supercoiling and torsional tension of DNA, which is introduced during the DNA replication and transcription, by transiently cleaving and rejoining one strand of the DNA duplex. Introduces a single-strand break via transesterification at a target site in duplex DNA. The scissile phosphodiester is attacked by the catalytic tyrosine of the enzyme, resulting in the formation of a DNA-(5'-phosphotyrosyl)-enzyme intermediate and the expulsion of a 3'-OH DNA strand. The free DNA strand then undergoes passage around the unbroken strand, thus removing DNA supercoils. Finally, in the religation step, the DNA 3'-OH attacks the covalent intermediate to expel the active-site tyrosine and restore the DNA phosphodiester backbone. The protein is DNA topoisomerase 1 (topA) of Pyrococcus furiosus (strain ATCC 43587 / DSM 3638 / JCM 8422 / Vc1).